Reading from the N-terminus, the 642-residue chain is Sec1 family domain-containing protein 1 (642 aa).

Ala2 carries the N-acetylalanine modification. Ser37, Ser303, and Ser528 each carry phosphoserine.

It belongs to the STXBP/unc-18/SEC1 family. Interacts with STX17. Interacts with STX5A. Interacts with the COG complex via COG4.

The protein resides in the cytoplasm. It is found in the endoplasmic reticulum membrane. Its subcellular location is the golgi apparatus. It localises to the golgi stack membrane. In terms of biological role, plays a role in SNARE-pin assembly and Golgi-to-ER retrograde transport via its interaction with COG4. Involved in vesicular transport between the endoplasmic reticulum and the Golgi. In Homo sapiens (Human), this protein is Sec1 family domain-containing protein 1 (SCFD1).